The sequence spans 35 residues: Photosystem II reaction center protein T (35 aa).

The helical transmembrane segment at 3–23 threads the bilayer; that stretch reads ALVYTFLLVSTLGIIFFAIFF.

The protein belongs to the PsbT family. In terms of assembly, PSII is composed of 1 copy each of membrane proteins PsbA, PsbB, PsbC, PsbD, PsbE, PsbF, PsbH, PsbI, PsbJ, PsbK, PsbL, PsbM, PsbT, PsbY, PsbZ, Psb30/Ycf12, at least 3 peripheral proteins of the oxygen-evolving complex and a large number of cofactors. It forms dimeric complexes.

Its subcellular location is the plastid. It localises to the chloroplast thylakoid membrane. Found at the monomer-monomer interface of the photosystem II (PS II) dimer, plays a role in assembly and dimerization of PSII. PSII is a light-driven water plastoquinone oxidoreductase, using light energy to abstract electrons from H(2)O, generating a proton gradient subsequently used for ATP formation. The polypeptide is Photosystem II reaction center protein T (Metasequoia glyptostroboides (Dawn redwood)).